The primary structure comprises 519 residues: Cobyric acid synthase (519 aa).

The region spanning 256–438 (WLRVAVPRLP…WHGLFENDAF (183 aa)) is the GATase cobBQ-type domain. Cys337 (nucleophile) is an active-site residue. His430 is a catalytic residue.

This sequence belongs to the CobB/CobQ family. CobQ subfamily.

Its pathway is cofactor biosynthesis; adenosylcobalamin biosynthesis. In terms of biological role, catalyzes amidations at positions B, D, E, and G on adenosylcobyrinic A,C-diamide. NH(2) groups are provided by glutamine, and one molecule of ATP is hydrogenolyzed for each amidation. This is Cobyric acid synthase from Saccharopolyspora erythraea (strain ATCC 11635 / DSM 40517 / JCM 4748 / NBRC 13426 / NCIMB 8594 / NRRL 2338).